A 432-amino-acid chain; its full sequence is Lecithin-cholesterol acyltransferase-like 1 (432 aa).

Residues His-7–Ser-29 form a helical membrane-spanning segment. Ser-209 serves as the catalytic Acyl-ester intermediate. Active-site charge relay system residues include Asp-374 and His-400.

It belongs to the AB hydrolase superfamily. Lipase family.

Its subcellular location is the membrane. The chain is Lecithin-cholesterol acyltransferase-like 1 (LCAT1) from Arabidopsis thaliana (Mouse-ear cress).